Consider the following 449-residue polypeptide: Glutamyl-tRNA reductase (449 aa).

Substrate contacts are provided by residues 49 to 52 (TCNR), Ser-107, 112 to 114 (EPQ), and Gln-118. The Nucleophile role is filled by Cys-50. 187-192 (GAGETI) lines the NADP(+) pocket. The tract at residues 418-449 (QLVERSSEGDDSQQAGADGGAARGDRRAAGGS) is disordered. Positions 440 to 449 (RGDRRAAGGS) are enriched in basic and acidic residues.

Belongs to the glutamyl-tRNA reductase family. As to quaternary structure, homodimer.

The catalysed reaction is (S)-4-amino-5-oxopentanoate + tRNA(Glu) + NADP(+) = L-glutamyl-tRNA(Glu) + NADPH + H(+). The protein operates within porphyrin-containing compound metabolism; protoporphyrin-IX biosynthesis; 5-aminolevulinate from L-glutamyl-tRNA(Glu): step 1/2. Functionally, catalyzes the NADPH-dependent reduction of glutamyl-tRNA(Glu) to glutamate 1-semialdehyde (GSA). The chain is Glutamyl-tRNA reductase from Halorhodospira halophila (strain DSM 244 / SL1) (Ectothiorhodospira halophila (strain DSM 244 / SL1)).